Consider the following 209-residue polypeptide: Large ribosomal subunit protein uL3 (209 aa).

The interval 118–151 (GFQGAIKRHGQSRGPMSHGSRYHRRPGSMGPVAP) is disordered.

The protein belongs to the universal ribosomal protein uL3 family. As to quaternary structure, part of the 50S ribosomal subunit. Forms a cluster with proteins L14 and L19.

Its function is as follows. One of the primary rRNA binding proteins, it binds directly near the 3'-end of the 23S rRNA, where it nucleates assembly of the 50S subunit. In Enterococcus faecalis (strain ATCC 700802 / V583), this protein is Large ribosomal subunit protein uL3.